Consider the following 500-residue polypeptide: Glycerol kinase (500 aa).

Threonine 17 is an ADP binding site. The ATP site is built by threonine 17, threonine 18, and serine 19. A sn-glycerol 3-phosphate-binding site is contributed by threonine 17. Arginine 21 is an ADP binding site. 4 residues coordinate sn-glycerol 3-phosphate: arginine 87, glutamate 88, tyrosine 139, and aspartate 243. Glycerol is bound by residues arginine 87, glutamate 88, tyrosine 139, aspartate 243, and glutamine 244. ADP contacts are provided by threonine 265 and glycine 308. The ATP site is built by threonine 265, glycine 308, glutamine 312, and glycine 409. Residues glycine 409 and asparagine 413 each contribute to the ADP site.

The protein belongs to the FGGY kinase family.

The enzyme catalyses glycerol + ATP = sn-glycerol 3-phosphate + ADP + H(+). Its pathway is polyol metabolism; glycerol degradation via glycerol kinase pathway; sn-glycerol 3-phosphate from glycerol: step 1/1. Inhibited by fructose 1,6-bisphosphate (FBP). Functionally, key enzyme in the regulation of glycerol uptake and metabolism. Catalyzes the phosphorylation of glycerol to yield sn-glycerol 3-phosphate. The polypeptide is Glycerol kinase (Pseudomonas fluorescens (strain Pf0-1)).